A 296-amino-acid chain; its full sequence is Phosphoribosylaminoimidazole-succinocarboxamide synthase (296 aa).

Belongs to the SAICAR synthetase family.

The catalysed reaction is 5-amino-1-(5-phospho-D-ribosyl)imidazole-4-carboxylate + L-aspartate + ATP = (2S)-2-[5-amino-1-(5-phospho-beta-D-ribosyl)imidazole-4-carboxamido]succinate + ADP + phosphate + 2 H(+). It functions in the pathway purine metabolism; IMP biosynthesis via de novo pathway; 5-amino-1-(5-phospho-D-ribosyl)imidazole-4-carboxamide from 5-amino-1-(5-phospho-D-ribosyl)imidazole-4-carboxylate: step 1/2. In Citrifermentans bemidjiense (strain ATCC BAA-1014 / DSM 16622 / JCM 12645 / Bem) (Geobacter bemidjiensis), this protein is Phosphoribosylaminoimidazole-succinocarboxamide synthase.